Consider the following 38-residue polypeptide: Small toxic protein BsrG (38 aa).

The chain crosses the membrane as a helical span at residues 11-31 (INFGGLILNTVLLIFNIMMIV).

Its subcellular location is the cell membrane. Its function is as follows. Toxic component of a type I toxin-antitoxin (TA) system; expression in the absence of cognate antisense antitoxin SR4 RNA leads to cell lysis. Induced expression causes membrane invaginations that dislocate the cell wall synthesis machinery, leading to eventual death. Unlike many type I TA systems it does not form pores. Base pairing occurs between the 3' UTRs of bsrG mRNA and SR4 RNA, which leads to initiation of degradation by RNase III (rnc) followed by the action of RNase Y (rny) and RNase R (rnr). Not toxic when expressed in E.coli. When induced during logarithmic growth it only slowly exerts its toxic effect. Expression during log growth leads to significant disturbances of cell envelope biosynthesis and cell morphology, causing cell membrane invaginations and delocalization of cell division and cell wall synthesis machinery. Cell lysis depends on mreB, lytC and lytD, suggesting expression of bsrG triggers autolysis rather than disintegration of the membrane. Additionally expression of bsrG also inhibits transcription. This is Small toxic protein BsrG from Bacillus subtilis (strain 168).